A 397-amino-acid polypeptide reads, in one-letter code: Linalool dehydratase/isomerase (397 aa).

The signal sequence occupies residues 1 to 26 (MRFTLKTTAIVSAAALLAGFGPPPRA). The Proton donor/acceptor role is filled by Asp-64. Intrachain disulfides connect Cys-74/Cys-127 and Cys-196/Cys-205. Residue Cys-196 participates in (2E)-geraniol binding.

In terms of assembly, homotetramer. Homopentamer.

Its subcellular location is the periplasm. It carries out the reaction (S)-linalool = beta-myrcene + H2O. The catalysed reaction is (2E)-geraniol = (S)-linalool. Its pathway is terpene metabolism; monoterpene degradation. With respect to regulation, is inhibited by molecular oxygen, high salt concentrations (NaCl, KCl, or MgCl(2)), urea, and Ti(III)citrate. Activity is not affected by EDTA. Its function is as follows. Anaerobically catalyzes the stereospecific hydration of beta-myrcene to (3S)-linalool and the isomerization of (3S)-linalool to geraniol. Is thus involved in the initial steps of the anaerobic degradation of the monoterpene beta-myrcene. Also catalyzes the reverse reactions, i.e. the isomerization of geraniol to linalool and the dehydration of linalool to myrcene. In this direction, the formation of myrcene from geraniol may be seen as a detoxification process for the monoterpene alcohol. Shows a relatively broad substrate specificity and can use various geraniol and linalool derivatives. Substrates required a specific alpha-methylallyl alcohol signature motif. Neither the monoterpenes alpha- and beta-ocimene nor the monoterpenoids citronellol and nerol can be used as substrates. The sequence is that of Linalool dehydratase/isomerase from Castellaniella defragrans (strain DSM 12143 / CCUG 39792 / 65Phen) (Alcaligenes defragrans).